The following is a 98-amino-acid chain: Aspartyl/glutamyl-tRNA(Asn/Gln) amidotransferase subunit C (98 aa).

The protein belongs to the GatC family. In terms of assembly, heterotrimer of A, B and C subunits.

The catalysed reaction is L-glutamyl-tRNA(Gln) + L-glutamine + ATP + H2O = L-glutaminyl-tRNA(Gln) + L-glutamate + ADP + phosphate + H(+). It carries out the reaction L-aspartyl-tRNA(Asn) + L-glutamine + ATP + H2O = L-asparaginyl-tRNA(Asn) + L-glutamate + ADP + phosphate + 2 H(+). In terms of biological role, allows the formation of correctly charged Asn-tRNA(Asn) or Gln-tRNA(Gln) through the transamidation of misacylated Asp-tRNA(Asn) or Glu-tRNA(Gln) in organisms which lack either or both of asparaginyl-tRNA or glutaminyl-tRNA synthetases. The reaction takes place in the presence of glutamine and ATP through an activated phospho-Asp-tRNA(Asn) or phospho-Glu-tRNA(Gln). The chain is Aspartyl/glutamyl-tRNA(Asn/Gln) amidotransferase subunit C from Bifidobacterium adolescentis (strain ATCC 15703 / DSM 20083 / NCTC 11814 / E194a).